The following is a 421-amino-acid chain: tRNA (guanine-N(7)-)-methyltransferase non-catalytic subunit TRM82 (421 aa).

3 WD repeats span residues 72–112 (AVYS…EDPE), 170–212 (GHVS…IVDK), and 216–258 (GHKE…SQYS).

This sequence belongs to the WD repeat TRM82 family. Forms a heterodimer with the catalytic subunit TRM8.

The protein resides in the nucleus. The protein operates within tRNA modification; N(7)-methylguanine-tRNA biosynthesis. Required for the formation of N(7)-methylguanine at position 46 (m7G46) in tRNA. In the complex, it is required to stabilize and induce conformational changes of the catalytic subunit. This chain is tRNA (guanine-N(7)-)-methyltransferase non-catalytic subunit TRM82, found in Candida glabrata (strain ATCC 2001 / BCRC 20586 / JCM 3761 / NBRC 0622 / NRRL Y-65 / CBS 138) (Yeast).